Here is a 134-residue protein sequence, read N- to C-terminus: Profilin-1 (134 aa).

A disulfide bond links Cys13 and Cys118. Positions 84 to 100 (AVIRGKKGSGGITIKKT) match the Involved in PIP2 interaction motif. The residue at position 114 (Thr114) is a Phosphothreonine.

It belongs to the profilin family. As to quaternary structure, occurs in many kinds of cells as a complex with monomeric actin in a 1:1 ratio. Post-translationally, phosphorylated by MAP kinases.

Its subcellular location is the cytoplasm. The protein localises to the cytoskeleton. In terms of biological role, binds to actin and affects the structure of the cytoskeleton. At high concentrations, profilin prevents the polymerization of actin, whereas it enhances it at low concentrations. This Olea europaea (Common olive) protein is Profilin-1.